The sequence spans 248 residues: Octanoyltransferase (248 aa).

One can recognise a BPL/LPL catalytic domain in the interval 53–234; sequence ADTVDEIWIV…RLIANLDGES (182 aa). Substrate is bound by residues 93 to 100, 165 to 167, and 178 to 180; these read RGGQITYH, ALG, and GLS. Cys196 acts as the Acyl-thioester intermediate in catalysis.

The protein belongs to the LipB family.

Its subcellular location is the cytoplasm. It catalyses the reaction octanoyl-[ACP] + L-lysyl-[protein] = N(6)-octanoyl-L-lysyl-[protein] + holo-[ACP] + H(+). It participates in protein modification; protein lipoylation via endogenous pathway; protein N(6)-(lipoyl)lysine from octanoyl-[acyl-carrier-protein]: step 1/2. In terms of biological role, catalyzes the transfer of endogenously produced octanoic acid from octanoyl-acyl-carrier-protein onto the lipoyl domains of lipoate-dependent enzymes. Lipoyl-ACP can also act as a substrate although octanoyl-ACP is likely to be the physiological substrate. This Burkholderia multivorans (strain ATCC 17616 / 249) protein is Octanoyltransferase.